The primary structure comprises 396 residues: Corticosteroid-binding globulin (396 aa).

A signal peptide spans 1–22; the sequence is MSLALYTCLLWLCTSGLWTAQA. N-linked (GlcNAc...) asparagine glycosylation is found at N88 and N216. Q246 is a binding site for cortisol. N-linked (GlcNAc...) asparagine glycosylation occurs at N252. D278 provides a ligand contact to cortisol. Residues N319 and N352 are each glycosylated (N-linked (GlcNAc...) asparagine). Residue W384 participates in cortisol binding.

Belongs to the serpin family. In terms of tissue distribution, expressed by the liver; secreted in plasma.

Its subcellular location is the secreted. Functionally, major transport protein for glucocorticoids and progestins in the blood of almost all vertebrate species. The sequence is that of Corticosteroid-binding globulin (Serpina6) from Rattus norvegicus (Rat).